We begin with the raw amino-acid sequence, 62 residues long: Large ribosomal subunit protein bL28 (62 aa).

Residues 1–24 (MARKCVITGRKTKAGNNRSHAMNS) form a disordered region. Over residues 14-24 (AGNNRSHAMNS) the composition is skewed to polar residues.

This sequence belongs to the bacterial ribosomal protein bL28 family.

In Bacillus pumilus (strain SAFR-032), this protein is Large ribosomal subunit protein bL28.